The chain runs to 487 residues: Protein nucleotidyltransferase YdiU (487 aa).

Positions 90, 92, 93, 113, 125, 126, 176, and 183 each coordinate ATP. The active-site Proton acceptor is Asp252. Residues Asn253 and Asp262 each coordinate Mg(2+). Asp262 contributes to the ATP binding site.

It belongs to the SELO family. Requires Mg(2+) as cofactor. The cofactor is Mn(2+).

It catalyses the reaction L-seryl-[protein] + ATP = 3-O-(5'-adenylyl)-L-seryl-[protein] + diphosphate. The enzyme catalyses L-threonyl-[protein] + ATP = 3-O-(5'-adenylyl)-L-threonyl-[protein] + diphosphate. It carries out the reaction L-tyrosyl-[protein] + ATP = O-(5'-adenylyl)-L-tyrosyl-[protein] + diphosphate. The catalysed reaction is L-histidyl-[protein] + UTP = N(tele)-(5'-uridylyl)-L-histidyl-[protein] + diphosphate. It catalyses the reaction L-seryl-[protein] + UTP = O-(5'-uridylyl)-L-seryl-[protein] + diphosphate. The enzyme catalyses L-tyrosyl-[protein] + UTP = O-(5'-uridylyl)-L-tyrosyl-[protein] + diphosphate. Nucleotidyltransferase involved in the post-translational modification of proteins. It can catalyze the addition of adenosine monophosphate (AMP) or uridine monophosphate (UMP) to a protein, resulting in modifications known as AMPylation and UMPylation. The protein is Protein nucleotidyltransferase YdiU of Azotobacter vinelandii (strain DJ / ATCC BAA-1303).